A 449-amino-acid polypeptide reads, in one-letter code: Wilms tumor protein homolog (449 aa).

The segment at 48 to 84 is disordered; sequence YGSLGGPAPPPAPPPPPPPPPHSFIKQEPSWGGAEPH. Residues 54-69 are compositionally biased toward pro residues; it reads PAPPPAPPPPPPPPPH. Residues lysine 73 and lysine 177 each participate in a glycyl lysine isopeptide (Lys-Gly) (interchain with G-Cter in SUMO) cross-link. Positions 236–244 match the 9aaTAD motif; it reads MTWNQMNLG. 3 consecutive C2H2-type zinc fingers follow at residues 323–347, 353–377, and 383–405; these read FMCAYPGCNKRYFKLSHLQMHSRKH, YQCDFKDCERRFSRSDQLKRHQRRH, and FQCKTCQRKFSRSDHLKTHTRTH. 2 important for interaction with target DNA regions span residues 367–381 and 393–401; these read SDQLKRHQRRHTGVK and SRSDHLKTH. A KTS motif motif is present at residues 408–410; sequence KTS. The C2H2-type 4 zinc finger occupies 414 to 438; it reads FSCRWPSCQKKFARSDELVRHHNMH. Lysine 444 participates in a covalent cross-link: Glycyl lysine isopeptide (Lys-Gly) (interchain with G-Cter in SUMO2).

This sequence belongs to the EGR C2H2-type zinc-finger protein family. Interacts with ZNF224 via the zinc-finger region. Interacts with WTAP, AMER1 and SRY. Homodimer. Interacts with WTIP. Interacts with actively translating polysomes. Detected in nuclear ribonucleoprotein (mRNP) particles. Interacts with U2AF2. Interacts with HNRNPU via the zinc-finger region. Interacts with CITED2. Interacts with RBM4.

It is found in the nucleus speckle. It localises to the nucleus. The protein localises to the nucleoplasm. The protein resides in the nucleolus. Its subcellular location is the cytoplasm. Functionally, transcription factor that plays an important role in cellular development and cell survival. Recognizes and binds to the DNA sequence 5'-GCG(T/G)GGGCG-3'. Regulates the expression of numerous target genes, including EPO. Plays an essential role for development of the urogenital system. It has a tumor suppressor as well as an oncogenic role in tumor formation. Function may be isoform-specific: isoforms lacking the KTS motif may act as transcription factors. Isoforms containing the KTS motif may bind mRNA and play a role in mRNA metabolism or splicing. Isoform 1 has lower affinity for DNA, and can bind RNA. This chain is Wilms tumor protein homolog (WT1), found in Sus scrofa (Pig).